The following is a 296-amino-acid chain: NAD kinase (296 aa).

Catalysis depends on Asp-73, which acts as the Proton acceptor. Residues 73-74, Lys-78, 151-152, Arg-178, Asp-180, and 191-196 contribute to the NAD(+) site; these read DG, NE, and TAHAMS.

The protein belongs to the NAD kinase family. A divalent metal cation is required as a cofactor.

It is found in the cytoplasm. The catalysed reaction is NAD(+) + ATP = ADP + NADP(+) + H(+). In terms of biological role, involved in the regulation of the intracellular balance of NAD and NADP, and is a key enzyme in the biosynthesis of NADP. Catalyzes specifically the phosphorylation on 2'-hydroxyl of the adenosine moiety of NAD to yield NADP. The protein is NAD kinase of Francisella tularensis subsp. holarctica (strain FTNF002-00 / FTA).